The sequence spans 676 residues: MVQTHSEVKRVEELRRLLQQASYAYYVLDAPVMEDAVYDQLYRELQQLEIQHPELVTPDSPTQRIGERPATQFLSVRHNIPLYSLENAFNVEELQAWDQRWRRQVAPTEAEYVAELKIDGSAIALTYENGILVRGATRGDGVTGEDITQNVRTIRSIPLRLSFDGIENIGKVEVRGEAFLPLEVFKQINEERQKAGEQLFANPRNAAAGTLRQLDSKIVARRRLDFFAYTLHISGMDDASIANTQWEALELLQKMGFRVNSQHQLCQSLAEVADYYRYWDTERLNLPYMTDGVVLKLNSFKLQEQLGFTQRFPRWAVALKYPAEEAPTRVENIAVNVGRTGALTPLAQMRPVQLAGTTVSRATLHNSDRIAQLDIRIGDTVIVRKAGEIIPEVVRVLKELRPVDTQPFIMPTHCPVCGQPVVRETGEAVTRCVNASCAAILKGSIEHWVSRDALDIKGVGEKLVHQLVDKELVHSVADLYSLTNEQLFVLERMGEKSAQKLIEAIAQSKNQPWSRVLYGLGIRHVGSVNAQLLSEKYRAVAELSSAKQSDIAGIYGIGAEIAQSVYQWFRISANQRLIERLQAAGLQFANTEEISAVDNANLKLVGKTFVITGTLPTLKRDEAKALIQKAGGKITESVSKKTDYLVVGEDAGSKLEKAQTLGIKQLSEAELLKILA.

NAD(+)-binding positions include 35-39 (DAVYD), 84-85 (SL), and E115. Residue K117 is the N6-AMP-lysine intermediate of the active site. Residues R138, E177, K296, and K320 each coordinate NAD(+). 4 residues coordinate Zn(2+): C414, C417, C432, and C437. The BRCT domain occupies 599-676 (NANLKLVGKT…SEAELLKILA (78 aa)).

This sequence belongs to the NAD-dependent DNA ligase family. LigA subfamily. Mg(2+) serves as cofactor. Requires Mn(2+) as cofactor.

The enzyme catalyses NAD(+) + (deoxyribonucleotide)n-3'-hydroxyl + 5'-phospho-(deoxyribonucleotide)m = (deoxyribonucleotide)n+m + AMP + beta-nicotinamide D-nucleotide.. Functionally, DNA ligase that catalyzes the formation of phosphodiester linkages between 5'-phosphoryl and 3'-hydroxyl groups in double-stranded DNA using NAD as a coenzyme and as the energy source for the reaction. It is essential for DNA replication and repair of damaged DNA. This is DNA ligase from Trichormus variabilis (strain ATCC 29413 / PCC 7937) (Anabaena variabilis).